The sequence spans 441 residues: MKPLSSLLLSAALSAAAPPHPASPQAPLADIPRIGVETRTEFSQNSLDDVVNASPLLSFHRDLVSIESISGNEGAAGAFVADFLESHNFTVIKQPVTTESDARFNIFAFPKSQSHSLDESHPSHGPQILLTSHIDTVPPFIPYSLHRDANDTDDRNILIAGRGTVDAKGSVAAQIFAALDTLAVQPPAPLGLLFVVGEETGGDGMKAFSQSTHLNPSPSRFHTVIFGEPTELALVAGHKGMLGFEVAAHGHAAHSGYPWLGESAISAILPALARVDHLGNIPVEEGGLPASDKYGRTTVNIGQMEGGVAANVVPSEARAGVAVRLAAGTHDEAREIVLKAVRDATGGDDRVVVNFSLEGYGPQDLDTDVAGFNVTTVNYGTDVPNLQLHPRPDGKVKRYLYGPGTIHVAHGDNEALTVAQLEEAVRGYKKLIQAALDRSTS.

Residues 1-16 form the signal peptide; sequence MKPLSSLLLSAALSAA. 2 N-linked (GlcNAc...) asparagine glycosylation sites follow: Asn88 and Asn150. Asp166 contributes to the Zn(2+) binding site. The Proton acceptor role is filled by Glu198. Glu199 is a Zn(2+) binding site. N-linked (GlcNAc...) asparagine glycosylation is found at Asn354 and Asn373.

The protein belongs to the peptidase M20A family. The cofactor is Zn(2+).

It is found in the secreted. In Neosartorya fischeri (strain ATCC 1020 / DSM 3700 / CBS 544.65 / FGSC A1164 / JCM 1740 / NRRL 181 / WB 181) (Aspergillus fischerianus), this protein is Probable carboxypeptidase NFIA_052450.